The primary structure comprises 518 residues: Glucan 1,4-alpha-maltohexaosidase (518 aa).

Positions 1–33 are cleaved as a signal peptide; sequence MKMRTGKKGFLSILLAFLLVITSIPFTLVDVEA. The Ca(2+) site is built by N139, D196, A219, D221, D232, D238, D240, and D242. A Na(+)-binding site is contributed by D196. Residues D221, D232, and D238 each contribute to the Na(+) site. The Nucleophile role is filled by D269. H273 serves as a coordination point for Ca(2+). E299 serves as the catalytic Proton donor.

The protein belongs to the glycosyl hydrolase 13 family. Requires Ca(2+) as cofactor. It depends on Na(+) as a cofactor.

It is found in the secreted. It carries out the reaction Hydrolysis of (1-&gt;4)-alpha-D-glucosidic linkages in amylaceous polysaccharides, to remove successive maltohexaose residues from the non-reducing chain ends.. It participates in glycan degradation; starch degradation. The sequence is that of Glucan 1,4-alpha-maltohexaosidase from Bacillus sp. (strain 707).